An 890-amino-acid chain; its full sequence is DNA mismatch repair protein MutS (890 aa).

Residue 607-614 (GPNMSGKS) participates in ATP binding.

Belongs to the DNA mismatch repair MutS family.

Its function is as follows. This protein is involved in the repair of mismatches in DNA. It is possible that it carries out the mismatch recognition step. This protein has a weak ATPase activity. The sequence is that of DNA mismatch repair protein MutS from Bacillus thuringiensis (strain Al Hakam).